The sequence spans 345 residues: Dihydroorotase (345 aa).

Positions 14 and 16 each coordinate Zn(2+). Substrate contacts are provided by residues 16-18 (HLR) and N42. The Zn(2+) site is built by K102, H139, and H177. An N6-carboxylysine modification is found at K102. Residue H139 coordinates substrate. L222 serves as a coordination point for substrate. D250 contributes to the Zn(2+) binding site. Residue D250 is part of the active site. Substrate-binding residues include H254 and A266.

It belongs to the metallo-dependent hydrolases superfamily. DHOase family. Class II DHOase subfamily. In terms of assembly, homodimer. Requires Zn(2+) as cofactor.

The enzyme catalyses (S)-dihydroorotate + H2O = N-carbamoyl-L-aspartate + H(+). It functions in the pathway pyrimidine metabolism; UMP biosynthesis via de novo pathway; (S)-dihydroorotate from bicarbonate: step 3/3. Functionally, catalyzes the reversible cyclization of carbamoyl aspartate to dihydroorotate. This Nitrosomonas eutropha (strain DSM 101675 / C91 / Nm57) protein is Dihydroorotase.